Consider the following 85-residue polypeptide: Translation initiation factor IF-1 (85 aa).

Residues 1 to 72 (MAKEELIEMH…SKGRITFRHI (72 aa)) enclose the S1-like domain.

This sequence belongs to the IF-1 family. As to quaternary structure, component of the 30S ribosomal translation pre-initiation complex which assembles on the 30S ribosome in the order IF-2 and IF-3, IF-1 and N-formylmethionyl-tRNA(fMet); mRNA recruitment can occur at any time during PIC assembly.

It localises to the cytoplasm. In terms of biological role, one of the essential components for the initiation of protein synthesis. Stabilizes the binding of IF-2 and IF-3 on the 30S subunit to which N-formylmethionyl-tRNA(fMet) subsequently binds. Helps modulate mRNA selection, yielding the 30S pre-initiation complex (PIC). Upon addition of the 50S ribosomal subunit IF-1, IF-2 and IF-3 are released leaving the mature 70S translation initiation complex. This Polaromonas naphthalenivorans (strain CJ2) protein is Translation initiation factor IF-1.